The sequence spans 471 residues: Uronate isomerase (471 aa).

It belongs to the metallo-dependent hydrolases superfamily. Uronate isomerase family.

The catalysed reaction is D-glucuronate = D-fructuronate. The enzyme catalyses aldehydo-D-galacturonate = keto-D-tagaturonate. It functions in the pathway carbohydrate metabolism; pentose and glucuronate interconversion. This chain is Uronate isomerase, found in Xanthomonas campestris pv. campestris (strain B100).